The sequence spans 135 residues: MGLTYQLIPVLVCLLVCTSHLVHGHKCDITLAEIIKTLNILTTRKNSCMELPVADVFAAPKNTTEKETFCRVGIELRRIYRSHTCLNKFLGGLDRNLNSLVSKTCSVNEAKTGTSTLKDLLERLKTIMKEKYSKC.

The N-terminal stretch at 1–24 is a signal peptide; it reads MGLTYQLIPVLVCLLVCTSHLVHG. Intrachain disulfides connect Cys-27-Cys-135, Cys-48-Cys-85, and Cys-70-Cys-105. Asn-62 is a glycosylation site (N-linked (GlcNAc...) asparagine).

It belongs to the IL-4/IL-13 family.

It localises to the secreted. In terms of biological role, participates in at least several B-cell activation processes as well as of other cell types. It is a costimulator of DNA-synthesis. It induces the expression of class II MHC molecules on resting B-cells. It enhances both secretion and cell surface expression of IgE and IgG1. It also regulates the expression of the low affinity Fc receptor for IgE (CD23) on both lymphocytes and monocytes. Positively regulates IL31RA expression in macrophages. Stimulates autophagy in dendritic cells by interfering with mTORC1 signaling and through the induction of RUFY4. The chain is Interleukin-4 (IL4) from Bubalus bubalis (Domestic water buffalo).